Reading from the N-terminus, the 380-residue chain is Cytochrome b (380 aa).

4 helical membrane-spanning segments follow: residues 34 to 54 (FGSL…LLAM), 78 to 99 (WLIR…YFHI), 114 to 134 (WNTG…GYVL), and 179 to 199 (FFAL…IHLT). Positions 84 and 98 each coordinate heme b. Heme b-binding residues include H183 and H197. H202 provides a ligand contact to a ubiquinone. A run of 4 helical transmembrane segments spans residues 227–247 (TKDI…ALFS), 289–309 (LGGV…PLLH), 321–341 (LSQL…WIGS), and 348–368 (FIII…ILFP).

The protein belongs to the cytochrome b family. The cytochrome bc1 complex contains 11 subunits: 3 respiratory subunits (MT-CYB, CYC1 and UQCRFS1), 2 core proteins (UQCRC1 and UQCRC2) and 6 low-molecular weight proteins (UQCRH/QCR6, UQCRB/QCR7, UQCRQ/QCR8, UQCR10/QCR9, UQCR11/QCR10 and a cleavage product of UQCRFS1). This cytochrome bc1 complex then forms a dimer. Heme b serves as cofactor.

It localises to the mitochondrion inner membrane. Its function is as follows. Component of the ubiquinol-cytochrome c reductase complex (complex III or cytochrome b-c1 complex) that is part of the mitochondrial respiratory chain. The b-c1 complex mediates electron transfer from ubiquinol to cytochrome c. Contributes to the generation of a proton gradient across the mitochondrial membrane that is then used for ATP synthesis. This is Cytochrome b (MT-CYB) from Pygoscelis papua (Gentoo penguin).